A 228-amino-acid polypeptide reads, in one-letter code: Carboxylesterase SOBER1 (228 aa).

Catalysis depends on charge relay system residues Ser106, Asp160, and His192.

This sequence belongs to the AB hydrolase superfamily. AB hydrolase 2 family.

Possesses carboxylesterase activity in vitro with a preference for short acyl chain substrates. Functions as a negative regulator of the hypersensitive response (HR) triggered by the bacterial type III effector protein AvrBsT. Possesses phospholipase A2 (PLA2) activity and hydrolyzes phosphatidylcholine (PC), a lipid that is hydrolyzed by phospholipase D (PLD) to produce phosphatidic acid (PA). Required to suppress AvrBsT-dependent HR and PLD-dependent production of PA in response to AvrBsT elicitation. The polypeptide is Carboxylesterase SOBER1 (Arabidopsis thaliana (Mouse-ear cress)).